The following is a 610-amino-acid chain: Butyryl-CoA dehydrogenase Swol_1933 (610 aa).

E451 (proton acceptor) is an active-site residue.

Belongs to the acyl-CoA dehydrogenase family. Requires FAD as cofactor.

The protein resides in the cytoplasm. It catalyses the reaction butanoyl-CoA + oxidized [electron-transfer flavoprotein] + H(+) = (2E)-butenoyl-CoA + reduced [electron-transfer flavoprotein]. The catalysed reaction is a short-chain 2,3-saturated fatty acyl-CoA + oxidized [electron-transfer flavoprotein] + H(+) = a short-chain (2E)-enoyl-CoA + reduced [electron-transfer flavoprotein]. Its pathway is lipid metabolism; butanoate metabolism. Its function is as follows. Involved in syntrophic growth of S.wolfei with butyrate, as part of the butyrate oxidation pathway. Catalyzes the oxidation of butanoyl-CoA to crotonyl-CoA. Probably passes the electrons released by this reaction on to electron-transfer flavoproteins (EtfAB) to finally generate hydrogen and/or formate. This is Butyryl-CoA dehydrogenase Swol_1933 from Syntrophomonas wolfei subsp. wolfei (strain DSM 2245B / Goettingen).